A 215-amino-acid polypeptide reads, in one-letter code: Probable serine/threonine-protein kinase 2 (215 aa).

The Protein kinase domain maps to 1 to 205; the sequence is MKPEQLVYLN…WLLKEMEQLL (205 aa).

This sequence belongs to the protein kinase superfamily. Ser/Thr protein kinase family. In terms of assembly, interacts with the kinase domain of host EIF2AK2.

The protein localises to the host cytoplasm. It catalyses the reaction L-seryl-[protein] + ATP = O-phospho-L-seryl-[protein] + ADP + H(+). The catalysed reaction is L-threonyl-[protein] + ATP = O-phospho-L-threonyl-[protein] + ADP + H(+). Plays a role in the inhibition of host eIF2alpha/EIF2S1 phosphorylation, thereby increasing viral fitness. In the insect host, targets the endogenous insect heme-regulated inhibitor (HRI)-like eIF2alpha kinase. The sequence is that of Probable serine/threonine-protein kinase 2 (PK2) from Autographa californica nuclear polyhedrosis virus (AcMNPV).